Consider the following 84-residue polypeptide: Acetylcholine receptor subunit alpha (84 aa).

2 cysteine pairs are disulfide-bonded: cysteine 7–cysteine 21 and cysteine 71–cysteine 72. A glycan (N-linked (GlcNAc...) asparagine) is linked at asparagine 20.

Belongs to the ligand-gated ion channel (TC 1.A.9) family. Acetylcholine receptor (TC 1.A.9.1) subfamily. Alpha-1/CHRNA1 sub-subfamily. One of the alpha chains that assemble within the acetylcholine receptor, a pentamer of two alpha chains, a beta, a delta, and a gamma (in immature muscle) or epsilon (in mature muscle) chains. The muscle heteropentamer composed of alpha-1, beta-1, delta, epsilon subunits interacts with the alpha-conotoxin ImII.

It localises to the postsynaptic cell membrane. The protein localises to the cell membrane. The enzyme catalyses K(+)(in) = K(+)(out). It carries out the reaction Na(+)(in) = Na(+)(out). In terms of biological role, upon acetylcholine binding, the AChR responds by an extensive change in conformation that affects all subunits and leads to opening of an ion-conducting channel across the plasma membrane. This Crocidura russula (Greater white-toothed shrew) protein is Acetylcholine receptor subunit alpha (CHRNA1).